A 178-amino-acid polypeptide reads, in one-letter code: High mobility group B protein 1 (178 aa).

Composition is skewed to basic and acidic residues over residues 1–52 (MKTA…DPNK) and 101–118 (APYEEKAAKRKAEYEKQM). Disordered regions lie at residues 1–59 (MKTA…APSA) and 75–178 (NPNV…EEED). A DNA-binding region (HMG box) is located at residues 53–122 (PKRAPSAFFV…EYEKQMDAYN (70 aa)). 2 positions are modified to phosphoserine: serine 137 and serine 146. The span at 140-178 (NDEDEASGEEELLEKEAAGDDEEEEEEEDDDDDDDEEED) shows a compositional bias: acidic residues.

It belongs to the HMGB family. In terms of tissue distribution, expressed in cotyledons, roots, stems, leaves and flowers (excluding pedicels).

It is found in the nucleus. Functionally, binds preferentially double-stranded DNA. Modulates general plant growth and stress tolerance. Confers sensitivity to salt and genotoxic (methyl methanesulfonate, MMS) stresses. The polypeptide is High mobility group B protein 1 (HMGB1) (Arabidopsis thaliana (Mouse-ear cress)).